Here is an 89-residue protein sequence, read N- to C-terminus: Small ribosomal subunit protein bS20 (89 aa).

Belongs to the bacterial ribosomal protein bS20 family.

Binds directly to 16S ribosomal RNA. The sequence is that of Small ribosomal subunit protein bS20 from Syntrophus aciditrophicus (strain SB).